Reading from the N-terminus, the 98-residue chain is Small ribosomal subunit protein bS6 (98 aa).

It belongs to the bacterial ribosomal protein bS6 family.

Binds together with bS18 to 16S ribosomal RNA. This chain is Small ribosomal subunit protein bS6, found in Limosilactobacillus reuteri (strain DSM 20016) (Lactobacillus reuteri).